The following is a 610-amino-acid chain: MGLKAAQKTLFPLRSIDDVVRLFAAELGREEPDLVLLSLVLGFVEHFLAVNRVIPTNVPELTFQPSPAPDPPGGLTYFPVADLSIIAALYARFTAQIRGAVDLSLYPREGGVSSRELVKKVSDVIWNSLSRSYFKDRAHIQSLFSFITGTKLDSSGVAFAVVGACQALGLRDVHLALSEDHAWVVFGPNGEQTAEVTWHGKGNEDRRGQTVNAGVAERSWLYLKGSYMRCDRKMEVAFMVCAINPSIDLHTDSLELLQLQQKLLWLLYDLGHLERYPMALGNLADLEELEPTPGRPDPLTLYHKGIASAKTYYRDEHIYPYMYLAGYHCRNRNVREALQAWADTATVIQDYNYCREDEEIYKEFFEVANDVIPNLLKEAASLLEAGEERPGEQTQGTQSQGSALQDPECFAHLLRFYDGICKWEEGSPTPVLHVGWATFLVQSLGRFEGQVRQKVRIVSREAEAAEAEEPWGEEAREGRRRGPRRESKPEEPPPPKKPALDKGPGAGQGAVPGPPRKPPGTVPGTARGAEGGSAAPVPAPAASPPPEGPVLTFQSEKMKGMKELLVATKINSSAIKLQLTAQSQVQMKKQKVSTPSDYTLSFLKRQRKGL.

Residues 214–390 (GVAERSWLYL…SLLEAGEERP (177 aa)) are interaction with FANCD2. 2 disordered regions span residues 385–404 (AGEERPGEQTQGTQSQGSAL) and 460–552 (REAE…PVLT). Residues 393-402 (QTQGTQSQGS) show a composition bias toward low complexity. Over residues 484-500 (RRESKPEEPPPPKKPAL) the composition is skewed to basic and acidic residues. Serine 487 is subject to Phosphoserine. Composition is skewed to pro residues over residues 512–521 (PGPPRKPPGT) and 537–548 (VPAPAASPPPEG). Position 543 is a phosphoserine (serine 543). Threonine 594 is subject to Phosphothreonine.

In terms of assembly, component of the MLL-HCF complex, at least composed of KMT2A/MLL1, MEN1, ASH2L, RBBP5, DPY30, WDR5, HCFC1 and HCFC2. Component of the menin-associated histone methyltransferase complex, at least composed of KMT2B/MLL4, MEN1, ASH2L, RBBP5, DPY30 and WDR5. Interacts with POLR2B. Interacts with POLR2A phosphorylated at 'Ser-5', but not with the unphosphorylated, nor 'Ser-2' phosphorylated POLR2A forms. Interacts with FANCD2 and DBF4. Interacts with SMAD3, but not with SMAD2, nor SMAD4. Directly interacts with NFKB1, NFKB2 and RELA. Interacts with JUND (via MBM motif); inhibits the interaction of JUND with MAPK10 and the phosphorylation of JUND by MAP kinases MAPK8 and MAPK10. Interacts with KMT2A (via MBM motif). The KMT2A-MEN1 complex interacts with PSIP1 with a greater affinity as MEN1 enhances interaction of KMT2A with PSIP1.

The protein localises to the nucleus. Its function is as follows. Essential component of a MLL/SET1 histone methyltransferase (HMT) complex, a complex that specifically methylates 'Lys-4' of histone H3 (H3K4). Functions as a transcriptional regulator. Binds to the TERT promoter and represses telomerase expression. Plays a role in TGFB1-mediated inhibition of cell-proliferation, possibly regulating SMAD3 transcriptional activity. Represses JUND-mediated transcriptional activation on AP1 sites, as well as that mediated by NFKB subunit RELA. Positively regulates HOXC8 and HOXC6 gene expression. May be involved in normal hematopoiesis through the activation of HOXA9 expression. May be involved in DNA repair. This Bos taurus (Bovine) protein is Menin (MEN1).